The sequence spans 338 residues: RNA 3'-terminal phosphate cyclase (338 aa).

Residues Gln-103 and 283–287 (YLADQ) contribute to the ATP site. The active-site Tele-AMP-histidine intermediate is His-308.

This sequence belongs to the RNA 3'-terminal cyclase family. Type 1 subfamily.

It is found in the cytoplasm. It catalyses the reaction a 3'-end 3'-phospho-ribonucleotide-RNA + ATP = a 3'-end 2',3'-cyclophospho-ribonucleotide-RNA + AMP + diphosphate. In terms of biological role, catalyzes the conversion of 3'-phosphate to a 2',3'-cyclic phosphodiester at the end of RNA. The mechanism of action of the enzyme occurs in 3 steps: (A) adenylation of the enzyme by ATP; (B) transfer of adenylate to an RNA-N3'P to produce RNA-N3'PP5'A; (C) and attack of the adjacent 2'-hydroxyl on the 3'-phosphorus in the diester linkage to produce the cyclic end product. The biological role of this enzyme is unknown but it is likely to function in some aspects of cellular RNA processing. In Shigella boydii serotype 18 (strain CDC 3083-94 / BS512), this protein is RNA 3'-terminal phosphate cyclase.